The primary structure comprises 273 residues: Protein BMH2 (273 aa).

An N-acetylserine modification is found at Ser2. Residues 236-273 (DISESGQEDQQQQQQQQQQQQQQQQQAPAEQTQGEPTK) form a disordered region. Positions 245–261 (QQQQQQQQQQQQQQQQQ) are enriched in low complexity. Positions 262 to 273 (APAEQTQGEPTK) are enriched in polar residues.

This sequence belongs to the 14-3-3 family. Interacts with NTH1 (via N-terminus when phosphorylated by PKA); the interaction is direct and activates NTH1. Interacts with FIN1.

Its subcellular location is the cytoplasm. It localises to the nucleus. This chain is Protein BMH2 (BMH2), found in Saccharomyces cerevisiae (strain ATCC 204508 / S288c) (Baker's yeast).